Reading from the N-terminus, the 578-residue chain is Arginine--tRNA ligase (578 aa).

Residues Pro-127–His-137 carry the 'HIGH' region motif.

This sequence belongs to the class-I aminoacyl-tRNA synthetase family. As to quaternary structure, monomer.

Its subcellular location is the cytoplasm. It carries out the reaction tRNA(Arg) + L-arginine + ATP = L-arginyl-tRNA(Arg) + AMP + diphosphate. In Pseudomonas syringae pv. tomato (strain ATCC BAA-871 / DC3000), this protein is Arginine--tRNA ligase.